The sequence spans 473 residues: TOX high mobility group box family member 2 (473 aa).

4 disordered regions span residues 1-42 (MSDG…SLLH), 139-211 (GLRS…VSAY), 277-302 (SKSPPDQGEAKNAQANPPAKMLPPKQ), and 340-473 (LLPG…PSAR). Over residues 8 to 20 (LLSTSQTYNSQGE) the composition is skewed to polar residues. The interval 25-63 (YEIPPITPPNLPEPSLLHLGDHEAGYHSLCHGLAPNGLL) is required for transcriptional activation. The segment covering 153–164 (GSKSATPSPSSS) has biased composition (low complexity). The segment covering 171-188 (DAHFKISGEKRPSTDPGK) has biased composition (basic and acidic residues). Positions 172–201 (AHFKISGEKRPSTDPGKKAKNPKKKKKKDP) match the Nuclear localization signal motif. A compositionally biased stretch (basic residues) spans 189–199 (KAKNPKKKKKK). Residues 204–272 (PQKPVSAYAL…EYLKALAAYR (69 aa)) constitute a DNA-binding region (HMG box). Composition is skewed to low complexity over residues 373–382 (LLSPPLSMSP) and 415–440 (SDFPSGSGSRSPGPSNPSSSGDWDGS). The span at 463 to 473 (SPKNLQEPSAR) shows a compositional bias: polar residues.

As to expression, highly expressed in ovary, where it is restricted to undifferentiated granulosa cells. Expressed in hypothalamus, pituitary gland, testis and uterus.

It localises to the nucleus. Its function is as follows. Putative transcriptional activator involved in the hypothalamo-pituitary-gonadal system. The protein is TOX high mobility group box family member 2 (Tox2) of Rattus norvegicus (Rat).